The sequence spans 227 residues: Venom allergen 5 (227 aa).

An N-terminal signal peptide occupies residues methionine 1–alanine 21. Intrachain disulfides connect cysteine 25-cysteine 37, cysteine 29-cysteine 125, cysteine 49-cysteine 117, and cysteine 193-cysteine 210. The region spanning glutamate 69–tyrosine 212 is the SCP domain.

The protein belongs to the CRISP family. Venom allergen 5-like subfamily. In terms of tissue distribution, expressed by the venom gland.

The protein localises to the secreted. The polypeptide is Venom allergen 5 (Polistes dominula (European paper wasp)).